The following is a 776-amino-acid chain: Transcription factor MYB3R-1 (776 aa).

Residues 1–41 form a disordered region; the sequence is MKREMKAPTTPLESLQGDLKGKQGRTSGPARRSTKGQWTPE. 3 consecutive HTH myb-type domains span residues 30-81, 82-137, and 138-188; these read ARRS…QKVL, NPEL…NPGI, and NKNA…KKKL. 3 consecutive DNA-binding regions (H-T-H motif) follow at residues 58–81, 110–133, and 161–184; these read WKKI…QKVL, WSTI…HNHL, and WAEL…NSSV. Disordered stretches follow at residues 217 to 253, 364 to 384, and 401 to 435; these read SSWM…STND, FQSS…TDPE, and DNMK…AETH. Composition is skewed to polar residues over residues 240–253, 364–380, and 423–432; these read CSQA…STND, FQSS…SNSD, and GKGSLCSQAA. The Nuclear localization signal motif lies at 648 to 655; that stretch reads KKRHRDLL.

In terms of assembly, component of a DREAM-like complex which modulates a variety of developmentally regulated genes and of the mitotic genes in proliferating and differentiated cells. In terms of tissue distribution, expressed ubiquitously at low levels. Expressed in roots, cotyledons, flowers and leaves, especially in vascular tissues.

It is found in the nucleus. In terms of biological role, transcription factor that binds 5'-AACGG-3' motifs in gene promoters. Transcription activator involved in the regulation of cytokinesis, probably via the activation of several G2/M phase-specific genes transcription (e.g. KNOLLE). Transcription repressor that regulates organ growth. Binds to the promoters of G2/M-specific genes and to E2F target genes to prevent their expression in post-mitotic cells and to restrict the time window of their expression in proliferating cells. Required for the maintenance of diploidy. The sequence is that of Transcription factor MYB3R-1 from Arabidopsis thaliana (Mouse-ear cress).